The following is a 322-amino-acid chain: Ribonuclease Z (322 aa).

Residues H60, H62, D64, H65, H140, D210, and H270 each contribute to the Zn(2+) site. D64 serves as the catalytic Proton acceptor.

The protein belongs to the RNase Z family. As to quaternary structure, homodimer. It depends on Zn(2+) as a cofactor.

The enzyme catalyses Endonucleolytic cleavage of RNA, removing extra 3' nucleotides from tRNA precursor, generating 3' termini of tRNAs. A 3'-hydroxy group is left at the tRNA terminus and a 5'-phosphoryl group is left at the trailer molecule.. In terms of biological role, zinc phosphodiesterase, which displays some tRNA 3'-processing endonuclease activity. Probably involved in tRNA maturation, by removing a 3'-trailer from precursor tRNA. The polypeptide is Ribonuclease Z (Methanococcus aeolicus (strain ATCC BAA-1280 / DSM 17508 / OCM 812 / Nankai-3)).